Reading from the N-terminus, the 593-residue chain is uncharacterized protein (593 aa).

The next 12 helical transmembrane spans lie at 21–41 (PAVF…SVVY), 60–80 (VGWW…YCGI), 97–117 (FSFW…GLVF), 148–168 (MALT…VVGL), 204–224 (VDVI…GFGI), 243–263 (WMVG…VSGV), 275–295 (MALA…LFLL), 328–348 (WTIF…MFIA), 359–379 (FIGA…TIFG), 410–430 (GLPI…FFFV), 457–477 (VYWA…GGAG), and 485–505 (AAIA…YAMT).

Belongs to the BCCT transporter (TC 2.A.15) family.

It localises to the cell membrane. This is an uncharacterized protein from Mycobacterium tuberculosis (strain CDC 1551 / Oshkosh).